The following is a 224-amino-acid chain: MAKKNAMTTTNGWIEAICGPMFAGKTDELIRKIKRYEYADVKSLVFSPATDTRSAQEIINSRDGRRIGSIKIKKAFEIYDYVLLHKPQLVGIDEVQFFDDSIVEVIQTLADNQINVIVAGLDRDFRGEPFGPIPKILGIAESVIRLTAICSECGAEASRSQRLIDNQPADYNCETILIGDTESYAPRCRHHHKVPNRPINDQTKNFKRALKNNFDKIVEQSSKD.

ATP is bound by residues 19–26 and 93–96; these read GPMFAGKT and DEVQ. Glu94 serves as the catalytic Proton acceptor. Zn(2+)-binding residues include Cys150, Cys153, Cys188, and His191.

This sequence belongs to the thymidine kinase family. Homotetramer.

The protein localises to the cytoplasm. The catalysed reaction is thymidine + ATP = dTMP + ADP + H(+). The chain is Thymidine kinase from Mycoplasmoides gallisepticum (strain R(low / passage 15 / clone 2)) (Mycoplasma gallisepticum).